The sequence spans 136 residues: uncharacterized protein (136 aa).

Residues 1–100 (MQSREPSGWR…PCSGGPDRPE (100 aa)) form a disordered region. Positions 66-75 (RLLRWHHRVP) are enriched in basic residues.

This is an uncharacterized protein from Homo sapiens (Human).